The chain runs to 687 residues: Geranylgeranyl transferase type-2 subunit alpha 2 (687 aa).

PFTA repeat units follow at residues 38 to 72 (YTKE…SRLD), 83 to 117 (IIDE…KKGH), 132 to 167 (YQKQ…LTKT), 168 to 203 (SEED…SLVA), and 214 to 248 (TIRR…QTVK). LRR repeat units follow at residues 523 to 545 (MNNI…VEKL), 546 to 567 (LFVQ…LEAM), 568 to 591 (QLLC…SLRH), 592 to 616 (LKQL…TTRY), and 646 to 668 (LMKL…EFSS).

Belongs to the protein prenyltransferase subunit alpha family. In terms of assembly, heterotrimer composed of the alpha subunit RGTA, the beta subunit RGTB and REP; within this trimer, RGTA and RGTB form the catalytic component, while REP mediates peptide substrate binding.

The catalysed reaction is geranylgeranyl diphosphate + L-cysteinyl-[protein] = S-geranylgeranyl-L-cysteinyl-[protein] + diphosphate. Its activity is regulated as follows. The enzymatic reaction requires the aid of the Rab escort protein REP. Its function is as follows. Catalyzes the transfer of a geranylgeranyl moiety from geranylgeranyl diphosphate to both cysteines of Rab proteins with the C-terminal sequence -CCXX, CXXX, -XCCX and -XCXC, such as RABA1A, RABA2A, RABF2A and RABG2. Does not seem to be a functional Rab-GGT alpha subunit in vitro. The protein is Geranylgeranyl transferase type-2 subunit alpha 2 of Arabidopsis thaliana (Mouse-ear cress).